A 916-amino-acid polypeptide reads, in one-letter code: Protein translocase subunit SecA (916 aa).

ATP contacts are provided by residues Gln-87, 105–109 (GEGKT), and Asp-512. A disordered region spans residues 857–916 (QHAEAPSMEQAVAGEDEELPEGPAPVVPLEPVRNEQKIGRNEPCPCGSGKKYKHCHGQLD). The Zn(2+) site is built by Cys-900, Cys-902, Cys-911, and His-912. The segment covering 906–916 (KKYKHCHGQLD) has biased composition (basic residues).

Belongs to the SecA family. Monomer and homodimer. Part of the essential Sec protein translocation apparatus which comprises SecA, SecYEG and auxiliary proteins SecDF-YajC and YidC. The cofactor is Zn(2+).

It localises to the cell inner membrane. The protein localises to the cytoplasm. The catalysed reaction is ATP + H2O + cellular proteinSide 1 = ADP + phosphate + cellular proteinSide 2.. Its function is as follows. Part of the Sec protein translocase complex. Interacts with the SecYEG preprotein conducting channel. Has a central role in coupling the hydrolysis of ATP to the transfer of proteins into and across the cell membrane, serving both as a receptor for the preprotein-SecB complex and as an ATP-driven molecular motor driving the stepwise translocation of polypeptide chains across the membrane. The chain is Protein translocase subunit SecA from Pseudomonas paraeruginosa (strain DSM 24068 / PA7) (Pseudomonas aeruginosa (strain PA7)).